The chain runs to 283 residues: Phosphatidylserine decarboxylase proenzyme (283 aa).

Residues D88, H145, and S248 each act as charge relay system; for autoendoproteolytic cleavage activity in the active site. Catalysis depends on S248, which acts as the Schiff-base intermediate with substrate; via pyruvic acid; for decarboxylase activity. S248 is modified (pyruvic acid (Ser); by autocatalysis).

This sequence belongs to the phosphatidylserine decarboxylase family. PSD-B subfamily. Prokaryotic type I sub-subfamily. Heterodimer of a large membrane-associated beta subunit and a small pyruvoyl-containing alpha subunit. The cofactor is pyruvate. In terms of processing, is synthesized initially as an inactive proenzyme. Formation of the active enzyme involves a self-maturation process in which the active site pyruvoyl group is generated from an internal serine residue via an autocatalytic post-translational modification. Two non-identical subunits are generated from the proenzyme in this reaction, and the pyruvate is formed at the N-terminus of the alpha chain, which is derived from the carboxyl end of the proenzyme. The autoendoproteolytic cleavage occurs by a canonical serine protease mechanism, in which the side chain hydroxyl group of the serine supplies its oxygen atom to form the C-terminus of the beta chain, while the remainder of the serine residue undergoes an oxidative deamination to produce ammonia and the pyruvoyl prosthetic group on the alpha chain. During this reaction, the Ser that is part of the protease active site of the proenzyme becomes the pyruvoyl prosthetic group, which constitutes an essential element of the active site of the mature decarboxylase.

It is found in the cell membrane. It carries out the reaction a 1,2-diacyl-sn-glycero-3-phospho-L-serine + H(+) = a 1,2-diacyl-sn-glycero-3-phosphoethanolamine + CO2. It functions in the pathway phospholipid metabolism; phosphatidylethanolamine biosynthesis; phosphatidylethanolamine from CDP-diacylglycerol: step 2/2. Its function is as follows. Catalyzes the formation of phosphatidylethanolamine (PtdEtn) from phosphatidylserine (PtdSer). The polypeptide is Phosphatidylserine decarboxylase proenzyme (Variovorax paradoxus (strain S110)).